The sequence spans 427 residues: Serine--tRNA ligase (427 aa).

Residue 236–238 (TAE) coordinates L-serine. ATP is bound at residue 267–269 (RRE). Glutamate 290 serves as a coordination point for L-serine. 354–357 (EISS) serves as a coordination point for ATP. Serine 390 provides a ligand contact to L-serine.

This sequence belongs to the class-II aminoacyl-tRNA synthetase family. Type-1 seryl-tRNA synthetase subfamily. Homodimer. The tRNA molecule binds across the dimer.

Its subcellular location is the cytoplasm. It carries out the reaction tRNA(Ser) + L-serine + ATP = L-seryl-tRNA(Ser) + AMP + diphosphate + H(+). The catalysed reaction is tRNA(Sec) + L-serine + ATP = L-seryl-tRNA(Sec) + AMP + diphosphate + H(+). The protein operates within aminoacyl-tRNA biosynthesis; selenocysteinyl-tRNA(Sec) biosynthesis; L-seryl-tRNA(Sec) from L-serine and tRNA(Sec): step 1/1. Its function is as follows. Catalyzes the attachment of serine to tRNA(Ser). Is also able to aminoacylate tRNA(Sec) with serine, to form the misacylated tRNA L-seryl-tRNA(Sec), which will be further converted into selenocysteinyl-tRNA(Sec). This is Serine--tRNA ligase from Rippkaea orientalis (strain PCC 8801 / RF-1) (Cyanothece sp. (strain PCC 8801)).